Consider the following 235-residue polypeptide: Octanoyltransferase (235 aa).

The region spanning 52 to 229 is the BPL/LPL catalytic domain; the sequence is KNRQASMIFC…SICSALEYIN (178 aa). Substrate contacts are provided by residues 89–96, 159–161, and 172–174; these read RGGKITWH, AIG, and GFA. Residue C190 is the Acyl-thioester intermediate of the active site.

Belongs to the LipB family.

It is found in the cytoplasm. The enzyme catalyses octanoyl-[ACP] + L-lysyl-[protein] = N(6)-octanoyl-L-lysyl-[protein] + holo-[ACP] + H(+). It functions in the pathway protein modification; protein lipoylation via endogenous pathway; protein N(6)-(lipoyl)lysine from octanoyl-[acyl-carrier-protein]: step 1/2. Functionally, catalyzes the transfer of endogenously produced octanoic acid from octanoyl-acyl-carrier-protein onto the lipoyl domains of lipoate-dependent enzymes. Lipoyl-ACP can also act as a substrate although octanoyl-ACP is likely to be the physiological substrate. This Tropheryma whipplei (strain Twist) (Whipple's bacillus) protein is Octanoyltransferase.